Reading from the N-terminus, the 348-residue chain is GTPase Obg (348 aa).

The 159-residue stretch at 1–159 (MKFLDLAKVY…RTIWLRLKLI (159 aa)) folds into the Obg domain. In terms of domain architecture, OBG-type G spans 160–327 (ADAGLLGLPN…VLRAVRAEID (168 aa)). Residues 166-173 (GLPNAGKS), 191-195 (FTTLH), 212-215 (DIPG), 279-282 (NKID), and 308-310 (SSV) each bind GTP. Residues serine 173 and threonine 193 each contribute to the Mg(2+) site.

The protein belongs to the TRAFAC class OBG-HflX-like GTPase superfamily. OBG GTPase family. As to quaternary structure, monomer. Mg(2+) is required as a cofactor.

It localises to the cytoplasm. Its function is as follows. An essential GTPase which binds GTP, GDP and possibly (p)ppGpp with moderate affinity, with high nucleotide exchange rates and a fairly low GTP hydrolysis rate. Plays a role in control of the cell cycle, stress response, ribosome biogenesis and in those bacteria that undergo differentiation, in morphogenesis control. This is GTPase Obg from Ruegeria sp. (strain TM1040) (Silicibacter sp.).